The following is a 147-amino-acid chain: Protein LOL4 (147 aa).

3 putative zinc finger regions span residues 4 to 34, 44 to 74, and 82 to 112; these read QLIC…LTAV, ELIC…LNST, and HLTC…VNHV.

It is found in the nucleus. Functionally, putative zinc finger that may be involved in programmed cell death and defense response. This is Protein LOL4 (LOL4) from Oryza sativa subsp. japonica (Rice).